Here is a 388-residue protein sequence, read N- to C-terminus: (S)-8-oxocitronellyl enol synthase ISY1 (388 aa).

Residues 35–37, 63–64, 81–82, 105–106, and Gln-143 each bind NADP(+); these read TGI, RR, DV, and TW. Catalysis depends on residues Lys-147 and Tyr-178. NADP(+) contacts are provided by residues Tyr-178, Ile-205, and 212-214; that span reads SMM.

It belongs to the short-chain dehydrogenases/reductases (SDR) family.

The catalysed reaction is (S)-8-oxocitronellyl enol + NADP(+) = (6E)-8-oxogeranial + NADPH + H(+). The enzyme catalyses (S)-8-oxocitronellyl enol + NAD(+) = (6E)-8-oxogeranial + NADH + H(+). In terms of biological role, iridoid synthase that catalyzes the first step in generation of the iridoid ring scaffold using the linear monoterpene (6E)-8-oxogeranial as substrate. Iridoids comprise a large family of distinctive bicyclic monoterpenes that possess a wide range of pharmacological activities, including anticancer, anti-inflammatory, antifungal and antibacterial activities. Catalyzes the conversion of the linear monoterpene (6E)-8-oxogeranial to (S)-8-oxocitronellyl enol, a precursor of nepetalactones, which are metabolites that are both insect-repellent and have euphoric effect in cats. The sequence is that of (S)-8-oxocitronellyl enol synthase ISY1 from Nepeta cataria (Catnip).